Reading from the N-terminus, the 396-residue chain is Elongation factor Tu (396 aa).

A tr-type G domain is found at 10–206 (KPHVNIGTIG…AVDNYIPEPE (197 aa)). A G1 region spans residues 19–26 (GHVDHGKT). 19 to 26 (GHVDHGKT) serves as a coordination point for GTP. A Mg(2+)-binding site is contributed by T26. The G2 stretch occupies residues 60 to 64 (GITIA). A G3 region spans residues 81–84 (DCPG). GTP-binding positions include 81 to 85 (DCPGH) and 136 to 139 (NKAD). The interval 136-139 (NKAD) is G4. The tract at residues 174–176 (SAL) is G5.

This sequence belongs to the TRAFAC class translation factor GTPase superfamily. Classic translation factor GTPase family. EF-Tu/EF-1A subfamily. As to quaternary structure, monomer.

The protein resides in the cytoplasm. It carries out the reaction GTP + H2O = GDP + phosphate + H(+). In terms of biological role, GTP hydrolase that promotes the GTP-dependent binding of aminoacyl-tRNA to the A-site of ribosomes during protein biosynthesis. This is Elongation factor Tu from Geobacter sulfurreducens (strain ATCC 51573 / DSM 12127 / PCA).